Here is a 313-residue protein sequence, read N- to C-terminus: Potassium channel subfamily K member 6 (313 aa).

At 1 to 4 the chain is on the cytoplasmic side; it reads MRRG. A helical transmembrane segment spans residues 5–25; the sequence is ALLASALAAYAGYLALGALLV. N79 and N85 each carry an N-linked (GlcNAc...) asparagine glycan. The pore-forming intramembrane region spans 90 to 115; that stretch reads AWDFASALFFASTLVTTVGYGYTTPL. 4 residues coordinate K(+): T106, V107, G108, and Y109. The tract at residues 106 to 111 is selectivity filter 1; sequence TVGYGY. The chain crosses the membrane as a helical span at residues 121 to 141; it reads AFSIVFALLGVPITMLLLTAS. Residues 142–172 lie on the Cytoplasmic side of the membrane; it reads AQRLSLLLTHAPLSWLSLHWGWPPQRAARWH. Residues 173–193 form a helical membrane-spanning segment; the sequence is LVALLMVIVAIFFLVPAAVFA. The segment at residues 199–223 is an intramembrane region (pore-forming); sequence WSFLDAFYFCFISLSTIGLGDYVPG. K(+)-binding residues include T214, I215, and G216. Positions 214–219 are selectivity filter 2; sequence TIGLGD. Residues 236–256 traverse the membrane as a helical segment; the sequence is VLVTAYLFLGLVAMVLVLQTF. At 257 to 313 the chain is on the cytoplasmic side; that stretch reads RRVSDLHGLTELILLPDPDPASLSQDEDDQVAVLDARTDLHQHLSAASHADYASIPR. Short sequence motifs (lysosomal targeting signal) lie at residues 282–290 and 308–312; these read DEDDQVAVL and YASIP.

The protein belongs to the two pore domain potassium channel (TC 1.A.1.8) family. In terms of assembly, homodimer; disulfide-linked. Post-translationally, N-glycosylation is necessary for targeting to lysosomes.

It is found in the late endosome membrane. The protein resides in the lysosome membrane. The catalysed reaction is K(+)(in) = K(+)(out). Its function is as follows. K(+) channel that conducts outward rectifying currents at the membranes of the endolysosomal system. Active in lysosomes where it regulates lysosome numbers and size. In macrophages, enables K(+) efflux coupled to ATP-induced NLRP3 inflammasome activation upon bacterial infection. Cooperates with ATP-gated P2RX7 to activate NLRP3 inflammasome, with P2RX7 conducting Ca(2+) and Na(+) influx that sets the membrane potential for K(+) efflux. This chain is Potassium channel subfamily K member 6, found in Mus musculus (Mouse).